A 605-amino-acid polypeptide reads, in one-letter code: Elongation factor 4 (605 aa).

The region spanning 4–181 (NKIKTFSIIA…AIVEYVPSPL (178 aa)) is the tr-type G domain. Residues 16 to 21 (DHGKST) and 128 to 131 (NKVD) contribute to the GTP site.

The protein belongs to the TRAFAC class translation factor GTPase superfamily. Classic translation factor GTPase family. LepA subfamily.

It is found in the cell membrane. It carries out the reaction GTP + H2O = GDP + phosphate + H(+). Required for accurate and efficient protein synthesis under certain stress conditions. May act as a fidelity factor of the translation reaction, by catalyzing a one-codon backward translocation of tRNAs on improperly translocated ribosomes. Back-translocation proceeds from a post-translocation (POST) complex to a pre-translocation (PRE) complex, thus giving elongation factor G a second chance to translocate the tRNAs correctly. Binds to ribosomes in a GTP-dependent manner. This chain is Elongation factor 4, found in Mycoplasmopsis synoviae (strain 53) (Mycoplasma synoviae).